The following is a 494-amino-acid chain: MKNDSRTFGASTVLTKTQNIGRISQIIGPVLDVTFPPGKMPNIYNSLIVKGQNTAGQEINVTCEVQQLLGNNKVRAVAMSATDGLMRGMDVVDTGAALSVPVGEATLGRIFNVLGEPVDNLGPVDASTTFPIHRSAPAFTQLDTKLSIFETGIKVVDLLAPYRRGGKIGLFGGAGVGKTVLIMELINNIAKAHGGVSVFGGVGERTREGNDLYMEMKESKVINEENISESKVALVYGQMNEPPGARMRVGLTALTMAEYFRDVNKQDVLLFIDNIFRFVQAGSEVSALLGRMPSAVGYQPTLSTEMGTLQERITSTKEGSITSIQAVYVPADDLTDPAPATTFAHLDATTVLSRGLAAKGIYPAVDPLDSTSTMLQPWIVGEEHYETAQGVKETLQRYKELQDIIAILGLDELSEEDRLVVARARKIERFLSQPFFVAEVSTGSPGKYVSLAETIKGFQMILSGELDSFPEQAFYLVGNIDEATAKAANLQMEN.

An ATP-binding site is contributed by 172–179 (GGAGVGKT).

It belongs to the ATPase alpha/beta chains family. In terms of assembly, F-type ATPases have 2 components, CF(1) - the catalytic core - and CF(0) - the membrane proton channel. CF(1) has five subunits: alpha(3), beta(3), gamma(1), delta(1), epsilon(1). CF(0) has four main subunits: a(1), b(1), b'(1) and c(9-12).

The protein resides in the plastid. It localises to the chloroplast thylakoid membrane. The catalysed reaction is ATP + H2O + 4 H(+)(in) = ADP + phosphate + 5 H(+)(out). Produces ATP from ADP in the presence of a proton gradient across the membrane. The catalytic sites are hosted primarily by the beta subunits. The chain is ATP synthase subunit beta, chloroplastic from Physcomitrium patens (Spreading-leaved earth moss).